The chain runs to 631 residues: Tail sheath protein (631 aa).

Belongs to the myoviridae tail sheath protein family. Homomultimer.

Its subcellular location is the virion. The protein resides in the host cytoplasm. Polymerizes as an extended structure around the baseplate-tail tube complex. During ejection, the sheath shifts to a contracted form, thereby making the inner tail tube protrude through the host cell envelope. This is Tail sheath protein from Salmonella typhi.